The following is a 177-amino-acid chain: Large ribosomal subunit protein uL6 (177 aa).

This sequence belongs to the universal ribosomal protein uL6 family. In terms of assembly, part of the 50S ribosomal subunit.

This protein binds to the 23S rRNA, and is important in its secondary structure. It is located near the subunit interface in the base of the L7/L12 stalk, and near the tRNA binding site of the peptidyltransferase center. The sequence is that of Large ribosomal subunit protein uL6 from Methylobacterium nodulans (strain LMG 21967 / CNCM I-2342 / ORS 2060).